The following is a 297-amino-acid chain: Protoheme IX farnesyltransferase 1 (297 aa).

The next 9 helical transmembrane spans lie at 23 to 43, 45 to 65, 93 to 113, 117 to 137, 145 to 165, 171 to 191, 216 to 236, 241 to 261, and 277 to 297; these read VVVL…RAGV, WSVL…AAVV, LPAL…LLVF, LTAW…TGFL, IVIG…AVSG, PLLL…ALAI, LHIL…YAIH, LYLV…WVLY, and IGYL…LLNL.

It belongs to the UbiA prenyltransferase family. Protoheme IX farnesyltransferase subfamily.

The protein localises to the cell inner membrane. It catalyses the reaction heme b + (2E,6E)-farnesyl diphosphate + H2O = Fe(II)-heme o + diphosphate. It functions in the pathway porphyrin-containing compound metabolism; heme O biosynthesis; heme O from protoheme: step 1/1. Converts heme B (protoheme IX) to heme O by substitution of the vinyl group on carbon 2 of heme B porphyrin ring with a hydroxyethyl farnesyl side group. The chain is Protoheme IX farnesyltransferase 1 from Pseudomonas putida (strain ATCC 47054 / DSM 6125 / CFBP 8728 / NCIMB 11950 / KT2440).